The following is a 106-amino-acid chain: Nucleoid-associated protein BRADO0764 (106 aa).

The protein belongs to the YbaB/EbfC family. In terms of assembly, homodimer.

Its subcellular location is the cytoplasm. The protein resides in the nucleoid. Its function is as follows. Binds to DNA and alters its conformation. May be involved in regulation of gene expression, nucleoid organization and DNA protection. The sequence is that of Nucleoid-associated protein BRADO0764 from Bradyrhizobium sp. (strain ORS 278).